A 379-amino-acid polypeptide reads, in one-letter code: Dual-specificity RNA methyltransferase RlmN (379 aa).

Glu95 serves as the catalytic Proton acceptor. The Radical SAM core domain maps to 101–345; that stretch reads EETRGTLCVS…TTVRKTRGDD (245 aa). The cysteines at positions 108 and 350 are disulfide-linked. Residues Cys115, Cys119, and Cys122 each coordinate [4Fe-4S] cluster. S-adenosyl-L-methionine contacts are provided by residues 176–177, Ser208, 230–232, and Asn307; these read GE and SLH. The active-site S-methylcysteine intermediate is the Cys350.

This sequence belongs to the radical SAM superfamily. RlmN family. Requires [4Fe-4S] cluster as cofactor.

The protein localises to the cytoplasm. It catalyses the reaction adenosine(2503) in 23S rRNA + 2 reduced [2Fe-2S]-[ferredoxin] + 2 S-adenosyl-L-methionine = 2-methyladenosine(2503) in 23S rRNA + 5'-deoxyadenosine + L-methionine + 2 oxidized [2Fe-2S]-[ferredoxin] + S-adenosyl-L-homocysteine. It carries out the reaction adenosine(37) in tRNA + 2 reduced [2Fe-2S]-[ferredoxin] + 2 S-adenosyl-L-methionine = 2-methyladenosine(37) in tRNA + 5'-deoxyadenosine + L-methionine + 2 oxidized [2Fe-2S]-[ferredoxin] + S-adenosyl-L-homocysteine. Its function is as follows. Specifically methylates position 2 of adenine 2503 in 23S rRNA and position 2 of adenine 37 in tRNAs. m2A2503 modification seems to play a crucial role in the proofreading step occurring at the peptidyl transferase center and thus would serve to optimize ribosomal fidelity. The chain is Dual-specificity RNA methyltransferase RlmN from Burkholderia ambifaria (strain MC40-6).